The primary structure comprises 270 residues: L-fucose dehydrogenase (270 aa).

NAD(+)-binding residues include arginine 19, isoleucine 21, aspartate 40, lysine 41, aspartate 62, valine 63, asparagine 89, tyrosine 154, lysine 158, isoleucine 187, threonine 189, and leucine 191. The Proton acceptor role is filled by tyrosine 154.

This sequence belongs to the short-chain dehydrogenases/reductases (SDR) family. In terms of assembly, homotetramer. As to expression, detected in retina.

It localises to the cytoplasm. The enzyme catalyses L-fucose + NAD(+) = L-fucono-1,5-lactone + NADH + H(+). It carries out the reaction D-arabinose + NAD(+) = D-arabinono-1,5-lactone + NADH + H(+). It catalyses the reaction L-galactose + NAD(+) = L-galactono-1,5-lactone + NADH + H(+). Its pathway is carbohydrate degradation; L-fucose degradation. Its function is as follows. Catalyzes the NAD(+)-dependent oxidation of L-fucose, yielding L-fucono-1,5-lactone, which rapidly converts spontaneously to L-fucone-1,4-lactone. Can also act on D-arabinose and L-galactose, with lower catalytic efficiency. Does not use NADPH. May be the initial enzyme of the putative L-fucose degradation pathway in mammals. The sequence is that of L-fucose dehydrogenase (HSD17B14) from Bos taurus (Bovine).